The chain runs to 410 residues: MNPQLNNLTLPIYMDYQATTPIDPRVMEAMLPYFTTKFGNPHSRSHSFGWEAENAVEEARSMVAKLIGADTKEIIFTSGATESNNLAIKGIAKFYSNKKNHIITVVSEHKCVLDACRHLEQEGIKITYLPIKPNGIIDLETLKNAITDQTMLVSVMVVNNEIGVVQPLKEIGKICREKGVFFHSDIAQGFGKIPIDVNAFNIDLASISGHKIYGPKGIGALYVRKKPRVRVTPLINGGGQERGMRSGTLPTPLIVGLGMAAEIAYSEMEKDTKHVNYLFDRFLNNIHKRISEVYLNGDKNQRYKGNLNLSFAGVEGESMILAIKDLAVSSGSACTSASLEPSYVLRSMGIGEELAHTAIRFGIGRFTTEQEVDYAVNLICSKIDKLRELSPLWEMMQEGIDLKKIKWAVH.

Pyridoxal 5'-phosphate-binding positions include 80–81, N160, Q188, and 208–210; these read AT and SGH. An N6-(pyridoxal phosphate)lysine modification is found at K211. T248 is a pyridoxal 5'-phosphate binding site. Residue C334 is the Cysteine persulfide intermediate of the active site. C334 provides a ligand contact to [2Fe-2S] cluster.

Belongs to the class-V pyridoxal-phosphate-dependent aminotransferase family. NifS/IscS subfamily. As to quaternary structure, homodimer. Forms a heterotetramer with IscU, interacts with other sulfur acceptors. Pyridoxal 5'-phosphate serves as cofactor.

Its subcellular location is the cytoplasm. The catalysed reaction is (sulfur carrier)-H + L-cysteine = (sulfur carrier)-SH + L-alanine. The protein operates within cofactor biosynthesis; iron-sulfur cluster biosynthesis. Master enzyme that delivers sulfur to a number of partners involved in Fe-S cluster assembly, tRNA modification or cofactor biosynthesis. Catalyzes the removal of elemental sulfur atoms from cysteine to produce alanine. Functions as a sulfur delivery protein for Fe-S cluster synthesis onto IscU, an Fe-S scaffold assembly protein, as well as other S acceptor proteins. The polypeptide is Cysteine desulfurase IscS (Rickettsia conorii (strain ATCC VR-613 / Malish 7)).